The primary structure comprises 589 residues: Phenylalanine--tRNA ligase beta subunit (589 aa).

The B5 domain occupies 302 to 379; that stretch reads LPYRKEMVRA…IAYGYNNIQM (78 aa). D357, D363, E366, and D367 together coordinate Mg(2+).

It belongs to the phenylalanyl-tRNA synthetase beta subunit family. Type 2 subfamily. As to quaternary structure, heterotetramer; dimer of two heterodimers formed by FARSA and FARSB. Mg(2+) serves as cofactor.

The protein localises to the cytoplasm. It catalyses the reaction tRNA(Phe) + L-phenylalanine + ATP = L-phenylalanyl-tRNA(Phe) + AMP + diphosphate + H(+). The chain is Phenylalanine--tRNA ligase beta subunit (Farsb) from Mus musculus (Mouse).